A 179-amino-acid chain; its full sequence is Methylated-DNA--protein-cysteine methyltransferase, inducible (179 aa).

Catalysis depends on Cys-141, which acts as the Nucleophile; methyl group acceptor.

Belongs to the MGMT family.

The enzyme catalyses a 6-O-methyl-2'-deoxyguanosine in DNA + L-cysteinyl-[protein] = S-methyl-L-cysteinyl-[protein] + a 2'-deoxyguanosine in DNA. It carries out the reaction a 4-O-methyl-thymidine in DNA + L-cysteinyl-[protein] = a thymidine in DNA + S-methyl-L-cysteinyl-[protein]. Functionally, involved in the cellular defense against the biological effects of O6-methylguanine (O6-MeG) and O4-methylthymine (O4-MeT) in DNA. Repairs the methylated nucleobase in DNA by stoichiometrically transferring the methyl group to a cysteine residue in the enzyme. This is a suicide reaction: the enzyme is irreversibly inactivated. This chain is Methylated-DNA--protein-cysteine methyltransferase, inducible (adaB), found in Bacillus subtilis (strain 168).